The sequence spans 370 residues: Neutral protease 2 homolog AFUB_070680 (370 aa).

The signal sequence occupies residues 1-19 (MKVTILASAILALINGALA). Residues 20 to 172 (LPANTPTLDV…PQAIKLLDRR (153 aa)) constitute a propeptide that is removed on maturation. Disulfide bonds link Cys-178-Cys-250 and Cys-257-Cys-275. His-300 contributes to the Zn(2+) binding site. Glu-301 is a catalytic residue. 2 residues coordinate Zn(2+): His-304 and Asp-315.

Belongs to the peptidase M35 family. Zn(2+) serves as cofactor.

The protein localises to the secreted. It catalyses the reaction Preferential cleavage of bonds with hydrophobic residues in P1'. Also 3-Asn-|-Gln-4 and 8-Gly-|-Ser-9 bonds in insulin B chain.. Its function is as follows. Secreted metalloproteinase that allows assimilation of proteinaceous substrates. Shows high activities on basic nuclear substrates such as histone and protamine. May be involved in virulence. This Aspergillus fumigatus (strain CBS 144.89 / FGSC A1163 / CEA10) (Neosartorya fumigata) protein is Neutral protease 2 homolog AFUB_070680.